The sequence spans 526 residues: Peptide chain release factor 3 (526 aa).

The 270-residue stretch at 8–277 folds into the tr-type G domain; sequence GKRRTFAIIS…GLTDWAPAPQ (270 aa). GTP is bound by residues 17 to 24, 85 to 89, and 139 to 142; these read SHPDAGKT, DTPGH, and NKLD.

The protein belongs to the TRAFAC class translation factor GTPase superfamily. Classic translation factor GTPase family. PrfC subfamily.

The protein resides in the cytoplasm. In terms of biological role, increases the formation of ribosomal termination complexes and stimulates activities of RF-1 and RF-2. It binds guanine nucleotides and has strong preference for UGA stop codons. It may interact directly with the ribosome. The stimulation of RF-1 and RF-2 is significantly reduced by GTP and GDP, but not by GMP. The chain is Peptide chain release factor 3 from Aliivibrio fischeri (strain MJ11) (Vibrio fischeri).